The chain runs to 246 residues: Small ribosomal subunit protein uS3 (246 aa).

Residues 19 to 98 form the KH type-2 domain; the sequence is IDEWLAQNFY…NPMLDARVQA (80 aa). The interval 218–246 is disordered; it reads LQEETASTLREHMEAARPGEEHEEDREES. The segment covering 226-237 has biased composition (basic and acidic residues); sequence LREHMEAARPGE.

This sequence belongs to the universal ribosomal protein uS3 family. Part of the 30S ribosomal subunit.

Binds the lower part of the 30S subunit head. The polypeptide is Small ribosomal subunit protein uS3 (Aeropyrum pernix (strain ATCC 700893 / DSM 11879 / JCM 9820 / NBRC 100138 / K1)).